The following is a 150-amino-acid chain: Arginine repressor (150 aa).

It belongs to the ArgR family.

It localises to the cytoplasm. Its pathway is amino-acid biosynthesis; L-arginine biosynthesis [regulation]. Its function is as follows. Regulates arginine biosynthesis genes. The sequence is that of Arginine repressor from Desulfitobacterium hafniense (strain DSM 10664 / DCB-2).